A 316-amino-acid polypeptide reads, in one-letter code: Pantothenate kinase (316 aa).

Residue glycine 95–serine 102 participates in ATP binding.

It belongs to the prokaryotic pantothenate kinase family.

Its subcellular location is the cytoplasm. It catalyses the reaction (R)-pantothenate + ATP = (R)-4'-phosphopantothenate + ADP + H(+). It participates in cofactor biosynthesis; coenzyme A biosynthesis; CoA from (R)-pantothenate: step 1/5. This chain is Pantothenate kinase, found in Shewanella pealeana (strain ATCC 700345 / ANG-SQ1).